Here is a 208-residue protein sequence, read N- to C-terminus: MPTQASQKRWKQILQSIYDAIEDHGYPPTVREIGKSVGLSSSSTVAAYLEKLLAAGLIAKDPAKPRTLEVTSAGRDFIGVQDHGIPIVGTVAAGVPITAIENIDDYFPVPDDLPYAADELFMLRVQGNSMIKIGILDGDQIIVKKQNDAENGQIVVAMTEEDEATVKRFYKEKNGIRLHPENDSMDDMFFPDVTILGIVVSLYRPALV.

Residues 30-50 constitute a DNA-binding region (H-T-H motif); sequence VREIGKSVGLSSSSTVAAYLE. Active-site for autocatalytic cleavage activity residues include S129 and K167.

Belongs to the peptidase S24 family. In terms of assembly, homodimer.

The catalysed reaction is Hydrolysis of Ala-|-Gly bond in repressor LexA.. Functionally, represses a number of genes involved in the response to DNA damage (SOS response), including recA and lexA. In the presence of single-stranded DNA, RecA interacts with LexA causing an autocatalytic cleavage which disrupts the DNA-binding part of LexA, leading to derepression of the SOS regulon and eventually DNA repair. This is LexA repressor from Lacticaseibacillus casei (strain BL23) (Lactobacillus casei).